The chain runs to 282 residues: Pantothenate synthetase (282 aa).

Residue 30–37 (MGYLHEGH) participates in ATP binding. The active-site Proton donor is His-37. Gln-61 is a (R)-pantoate binding site. Gln-61 is a beta-alanine binding site. 147-150 (GQKD) is an ATP binding site. Gln-153 lines the (R)-pantoate pocket. ATP is bound by residues Val-176 and 184-187 (MSSR).

It belongs to the pantothenate synthetase family. Homodimer.

Its subcellular location is the cytoplasm. The catalysed reaction is (R)-pantoate + beta-alanine + ATP = (R)-pantothenate + AMP + diphosphate + H(+). It participates in cofactor biosynthesis; (R)-pantothenate biosynthesis; (R)-pantothenate from (R)-pantoate and beta-alanine: step 1/1. Catalyzes the condensation of pantoate with beta-alanine in an ATP-dependent reaction via a pantoyl-adenylate intermediate. In Pelotomaculum thermopropionicum (strain DSM 13744 / JCM 10971 / SI), this protein is Pantothenate synthetase.